Reading from the N-terminus, the 419-residue chain is ADIPOR-like receptor IZH3 (419 aa).

The tract at residues 1–65 is disordered; that stretch reads MSHPNTHMPR…GEAGGGRSVL (65 aa). At 1–147 the chain is on the lumenal side; it reads MSHPNTHMPR…LNAYGWHNET (147 aa). An N-linked (GlcNAc...) asparagine glycan is attached at Asn-145. A helical transmembrane segment spans residues 148–168; that stretch reads INIWSHLVGAAVLAYLLCWGW. At 169–184 the chain is on the cytoplasmic side; the sequence is PRSDVYRAAQVPRLAK. The helical transmembrane segment at 185-205 threads the bilayer; that stretch reads WAIGAFLACGVKCMASSVAWH. The Lumenal portion of the chain corresponds to 206 to 225; the sequence is TFNGTCHLKLRSRFVCVDYT. The N-linked (GlcNAc...) asparagine glycan is linked to Asn-208. Residues 226 to 246 form a helical membrane-spanning segment; sequence GITLLVTASVVTTVAVTLYGL. Over 247–249 the chain is Cytoplasmic; it reads SRP. A helical membrane pass occupies residues 250-270; that stretch reads LMYAYMVASIGLGTAAGVMNW. Over 271–283 the chain is Lumenal; the sequence is SPHFDRPEARPLR. The chain crosses the membrane as a helical span at residues 284 to 304; it reads IAVYVGLAALGLVSFVHVWMQ. The Cytoplasmic portion of the chain corresponds to 305-311; the sequence is VRWASAH. Residues 312–332 traverse the membrane as a helical segment; sequence LMAPLVYKSLVWYGIGVVFYA. The Lumenal portion of the chain corresponds to 333–377; that stretch reads TLVPERWRSDVTLDCCSGPVHEAACRQFRDLPPVARKDRQFWSLW. A helical transmembrane segment spans residues 378-398; sequence WVDYFCHSHFLWHVFVVLGVV. Residues 399-419 are Cytoplasmic-facing; the sequence is GHYRAVLQMSRIVWLDAGRAF.

Belongs to the ADIPOR family.

Its subcellular location is the endoplasmic reticulum membrane. In terms of biological role, ADIPOR-like receptor involved in zinc metabolism either by altering membrane sterol content or by directly altering cellular zinc levels. In Eremothecium gossypii (strain ATCC 10895 / CBS 109.51 / FGSC 9923 / NRRL Y-1056) (Yeast), this protein is ADIPOR-like receptor IZH3 (IZH3).